A 506-amino-acid polypeptide reads, in one-letter code: Anaerobic nitric oxide reductase transcription regulator NorR (506 aa).

D57 is modified (4-aspartylphosphate). The Sigma-54 factor interaction domain maps to 187–416 (MIGLSPAMTQ…LEHAIHRAVV (230 aa)). Residues 215–222 (GETGTGKE) and 278–287 (ADNGTLFLDE) each bind ATP. The H-T-H motif DNA-binding region spans 481–500 (WAASARALETDVANLHRLAK).

Its pathway is nitrogen metabolism; nitric oxide reduction. Functionally, required for the expression of anaerobic nitric oxide (NO) reductase, acts as a transcriptional activator for at least the norVW operon. Activation also requires sigma-54. In Salmonella dublin (strain CT_02021853), this protein is Anaerobic nitric oxide reductase transcription regulator NorR.